Consider the following 416-residue polypeptide: Enterobactin exporter EntS (416 aa).

Residues 1-21 (MNKQSWLLNLSLLKTHPAFRA) lie on the Cytoplasmic side of the membrane. The chain crosses the membrane as a helical span at residues 22–42 (VFLARFISIVSLGLLGVAVPV). Over 43 to 55 (QIQIMTHSTWQVG) the chain is Periplasmic. A helical transmembrane segment spans residues 56-76 (LSVTLTGGAMFVGLMVGGVLA). Residues 77–83 (DRYERKK) are Cytoplasmic-facing. The chain crosses the membrane as a helical span at residues 84–104 (VILLARGTCGIGFIGLCLNAL). Residues 105–109 (LPEPS) lie on the Periplasmic side of the membrane. Residues 110–130 (LLAIYLLGLWDGFFASLGVTA) traverse the membrane as a helical segment. Over 131–156 (LLAATPALVGRENLMQAGAITMLTVR) the chain is Cytoplasmic. Residues 157–177 (LGSVISPMIGGLLLATGGVAW) traverse the membrane as a helical segment. A topological domain (periplasmic) is located at residue asparagine 178. The helical transmembrane segment at 179 to 199 (YGLAAAGTFITLLPLLSLPAL) threads the bilayer. Residues 200-218 (PPPPQPREHPLKSLLAGFR) are Cytoplasmic-facing. Residues 219 to 239 (FLLASPLVGGIALLGGLLTMA) form a helical membrane-spanning segment. At 240–256 (SAVRVLYPALADNWQMS) the chain is on the periplasmic side. The chain crosses the membrane as a helical span at residues 257-277 (AAQIGFLYAAIPLGAAIGALT). The Cytoplasmic portion of the chain corresponds to 278-287 (SGKLAHSVRP). Residues 288–307 (GLLMLLSTLGAFLAIGLFGL) traverse the membrane as a helical segment. Residues 308–313 (MPMWIL) lie on the Periplasmic side of the membrane. A helical membrane pass occupies residues 314 to 336 (GVVCLALFGWLSAVSSLLQYTML). Over 337–356 (QTQTPEAMLGRINGLWTAQN) the chain is Cytoplasmic. Residues 357-377 (VTGDAIGAALLGGLGAMMTPV) form a helical membrane-spanning segment. Alanine 378 is a topological domain (periplasmic). A helical membrane pass occupies residues 379 to 399 (SASASGFGLLIIGVLLLLVLV). At 400–416 (ELRRFRQTPPQVTASDS) the chain is on the cytoplasmic side.

The protein belongs to the major facilitator superfamily. EntS (TC 2.A.1.38) family.

It localises to the cell inner membrane. Its function is as follows. Component of an export pathway for enterobactin. This chain is Enterobactin exporter EntS, found in Escherichia coli O127:H6 (strain E2348/69 / EPEC).